The chain runs to 430 residues: Retinoic acid receptor RXR-alpha-A (430 aa).

Low complexity predominate over residues 1-20 (MHPSLLSPTSLGPSGSLHSP). Disordered regions lie at residues 1 to 25 (MHPS…STLS) and 48 to 73 (ASPG…SSSE). The segment at 1-99 (MHPSLLSPTS…QPSGTPLSLT (99 aa)) is modulating. The span at 58–72 (ISPQLNSHMNSVSSS) shows a compositional bias: polar residues. The nuclear receptor DNA-binding region spans 100–175 (KHICAICGDR…MGMKREAVQE (76 aa)). The Zn(2+) site is built by Cys-103, Cys-106, Cys-120, and Cys-123. The NR C4-type zinc finger occupies 103–123 (CAICGDRSSGKHYGVYSCEGC). A nuclear localization signal region spans residues 128–133 (KRTVRK). Positions 139, 145, 155, and 158 each coordinate Zn(2+). The NR C4-type zinc finger occupies 139–158 (CRDNKDCVIDKRQRNRCQYC). Basic and acidic residues predominate over residues 174-186 (QEERQRAKERSEN). Positions 174 to 196 (QEERQRAKERSENEVESTSSANE) are disordered. Positions 176–192 (ERQRAKERSENEVESTS) are hinge. In terms of domain architecture, NR LBD spans 195 to 426 (NEDMPVEKIL…TFLMEMLEAP (232 aa)). 9-cis-retinoate contacts are provided by Arg-284 and Ala-295. Residues Arg-284 and Ala-295 each coordinate all-trans-retinoate. The tract at residues 316–336 (RVLTELVSKMRDMQMDKTELG) is required for nuclear export. Residues 415–426 (IDTFLMEMLEAP) are AF-2.

Belongs to the nuclear hormone receptor family. NR2 subfamily. In terms of assembly, homodimer. Heterodimer; with a rar molecule. Binds DNA preferentially as a rar/rxr heterodimer.

It localises to the nucleus. In terms of biological role, receptor for retinoic acid that acts as a transcription factor. Forms homo- or heterodimers with retinoic acid receptors (rars) and binds to target response elements in response to their ligands, all-trans or 9-cis retinoic acid, to regulate gene expression in various biological processes. The rar/rxr heterodimers bind to the retinoic acid response elements (RARE) composed of tandem 5'-AGGTCA-3' sites known as DR1-DR5 to regulate transcription. The high affinity ligand for rxrs is 9-cis retinoic acid. In the absence of ligand, the rar/rxr heterodimers associate with a multiprotein complex containing transcription corepressors that induce histone deacetylation, chromatin condensation and transcriptional suppression. On ligand binding, the corepressors dissociate from the receptors and coactivators are recruited leading to transcriptional activation. This Danio rerio (Zebrafish) protein is Retinoic acid receptor RXR-alpha-A.